Consider the following 226-residue polypeptide: 2-C-methyl-D-erythritol 4-phosphate cytidylyltransferase (226 aa).

This sequence belongs to the IspD/TarI cytidylyltransferase family. IspD subfamily.

The catalysed reaction is 2-C-methyl-D-erythritol 4-phosphate + CTP + H(+) = 4-CDP-2-C-methyl-D-erythritol + diphosphate. Its pathway is isoprenoid biosynthesis; isopentenyl diphosphate biosynthesis via DXP pathway; isopentenyl diphosphate from 1-deoxy-D-xylulose 5-phosphate: step 2/6. Catalyzes the formation of 4-diphosphocytidyl-2-C-methyl-D-erythritol from CTP and 2-C-methyl-D-erythritol 4-phosphate (MEP). This Bacillus cytotoxicus (strain DSM 22905 / CIP 110041 / 391-98 / NVH 391-98) protein is 2-C-methyl-D-erythritol 4-phosphate cytidylyltransferase.